Reading from the N-terminus, the 423-residue chain is 3-phosphoshikimate 1-carboxyvinyltransferase (423 aa).

3-phosphoshikimate contacts are provided by lysine 20, serine 21, and arginine 25. Lysine 20 provides a ligand contact to phosphoenolpyruvate. Residues glycine 91 and arginine 119 each coordinate phosphoenolpyruvate. Threonine 163, serine 164, glutamine 165, aspartate 305, glutamine 328, and lysine 332 together coordinate 3-phosphoshikimate. Residue glutamine 165 participates in phosphoenolpyruvate binding. Aspartate 305 (proton acceptor) is an active-site residue. Phosphoenolpyruvate contacts are provided by arginine 336 and arginine 377.

The protein belongs to the EPSP synthase family. As to quaternary structure, monomer.

It is found in the cytoplasm. It catalyses the reaction 3-phosphoshikimate + phosphoenolpyruvate = 5-O-(1-carboxyvinyl)-3-phosphoshikimate + phosphate. It participates in metabolic intermediate biosynthesis; chorismate biosynthesis; chorismate from D-erythrose 4-phosphate and phosphoenolpyruvate: step 6/7. In terms of biological role, catalyzes the transfer of the enolpyruvyl moiety of phosphoenolpyruvate (PEP) to the 5-hydroxyl of shikimate-3-phosphate (S3P) to produce enolpyruvyl shikimate-3-phosphate and inorganic phosphate. This Acetivibrio thermocellus (strain ATCC 27405 / DSM 1237 / JCM 9322 / NBRC 103400 / NCIMB 10682 / NRRL B-4536 / VPI 7372) (Clostridium thermocellum) protein is 3-phosphoshikimate 1-carboxyvinyltransferase.